A 501-amino-acid polypeptide reads, in one-letter code: Glutamate--tRNA ligase (501 aa).

The 'HIGH' region motif lies at 21–31; that stretch reads PSPTGTPHVGL. Positions 266 to 270 match the 'KMSKS' region motif; the sequence is KLSKR. Lys269 lines the ATP pocket.

It belongs to the class-I aminoacyl-tRNA synthetase family. Glutamate--tRNA ligase type 1 subfamily. As to quaternary structure, monomer.

It localises to the cytoplasm. The catalysed reaction is tRNA(Glu) + L-glutamate + ATP = L-glutamyl-tRNA(Glu) + AMP + diphosphate. Functionally, catalyzes the attachment of glutamate to tRNA(Glu) in a two-step reaction: glutamate is first activated by ATP to form Glu-AMP and then transferred to the acceptor end of tRNA(Glu). In Kineococcus radiotolerans (strain ATCC BAA-149 / DSM 14245 / SRS30216), this protein is Glutamate--tRNA ligase.